The sequence spans 828 residues: Periplasmic nitrate reductase (828 aa).

Positions 1–31 form a signal peptide, tat-type signal; it reads MKLSRRSFMKANAVAAAAAAAGLSVPGVARA. The 4Fe-4S Mo/W bis-MGD-type domain occupies 39 to 95; the sequence is IKWDKAPCRFCGTGCGVLVGTQQGRVVACQGDPDAPVNRGLNCIKGYFLPKIMYGKD. The [4Fe-4S] cluster site is built by Cys-46, Cys-49, Cys-53, and Cys-81. Mo-bis(molybdopterin guanine dinucleotide)-binding positions include Lys-83, Gln-150, Asn-175, Cys-179, 212–219, 243–247, 262–264, Met-372, Gln-376, Asn-482, 508–509, Lys-531, Asp-558, and 718–727; these read WGSNMAEM, STFQH, QSD, SD, and TGRVLEHWHT. Residue Phe-794 participates in substrate binding. Mo-bis(molybdopterin guanine dinucleotide)-binding residues include Asn-802 and Lys-819.

Belongs to the prokaryotic molybdopterin-containing oxidoreductase family. NasA/NapA/NarB subfamily. Component of the periplasmic nitrate reductase NapAB complex composed of NapA and NapB. [4Fe-4S] cluster is required as a cofactor. The cofactor is Mo-bis(molybdopterin guanine dinucleotide). Post-translationally, predicted to be exported by the Tat system. The position of the signal peptide cleavage has not been experimentally proven.

Its subcellular location is the periplasm. It carries out the reaction 2 Fe(II)-[cytochrome] + nitrate + 2 H(+) = 2 Fe(III)-[cytochrome] + nitrite + H2O. Catalytic subunit of the periplasmic nitrate reductase complex NapAB. Receives electrons from NapB and catalyzes the reduction of nitrate to nitrite. The sequence is that of Periplasmic nitrate reductase from Salmonella paratyphi C (strain RKS4594).